Reading from the N-terminus, the 141-residue chain is Putative pre-16S rRNA nuclease (141 aa).

Belongs to the YqgF nuclease family.

The protein localises to the cytoplasm. Could be a nuclease involved in processing of the 5'-end of pre-16S rRNA. The chain is Putative pre-16S rRNA nuclease from Aliivibrio salmonicida (strain LFI1238) (Vibrio salmonicida (strain LFI1238)).